We begin with the raw amino-acid sequence, 252 residues long: Hydroxyacylglutathione hydrolase (252 aa).

7 residues coordinate Zn(2+): histidine 54, histidine 56, aspartate 58, histidine 59, histidine 113, aspartate 132, and histidine 170.

This sequence belongs to the metallo-beta-lactamase superfamily. Glyoxalase II family. In terms of assembly, monomer. Requires Zn(2+) as cofactor.

It carries out the reaction an S-(2-hydroxyacyl)glutathione + H2O = a 2-hydroxy carboxylate + glutathione + H(+). Its pathway is secondary metabolite metabolism; methylglyoxal degradation; (R)-lactate from methylglyoxal: step 2/2. Thiolesterase that catalyzes the hydrolysis of S-D-lactoyl-glutathione to form glutathione and D-lactic acid. This chain is Hydroxyacylglutathione hydrolase, found in Synechococcus sp. (strain JA-3-3Ab) (Cyanobacteria bacterium Yellowstone A-Prime).